A 367-amino-acid chain; its full sequence is Protein SUPPRESSOR OF FRI 4 (367 aa).

Residues 7–66 (RATEKVWCYYCDREFDDEKILVQHQKAKHFKCHVCHKKLSTASGMVIHVLQVHKENVTKV) form a BED-type zinc finger. Residues C38, C41, H54, and H59 each coordinate Zn(2+). The disordered stretch occupies residues 246 to 309 (PFSAPLPVGG…PPVIANKAPS (64 aa)). Polar residues predominate over residues 273 to 295 (PNNSIPGGTNAHSYASGPNTSGP).

In terms of assembly, homodimer. Component of the transcription activator complex FRI-C composed of FRI, FRL1, SUF4, FLX and FES1. Interacts with LD, ASHH2, FRL1, (via C-terminus) with FRI (via C-terminus), and with SWC6, a component of the SWR1 chromatin-remodeling complex. Binds to MED18 to regulate flowering time; recruits MED18 to FLC promoter. Expressed in root, shoot apex, leaves, stem and flowers. Expressed in expanding leaves, in the vasculature of fully expanded leaves, in the inflorescence, throughout young floral primordia, in the carpels of older flowers and in fertilized ovules.

It localises to the nucleus. Functionally, sequence-specific DNA binding factor that recognizes the 5'-CCAAATTTTAAGTTT-3' sequence. Recruits the FRI-C complex to the FLC promoter. Required for FRI-mediated FLC activation, but has no effect on the expression of MAF1, MAF2, MAF3, MAF5, UFC and CO. Dispensable for the reactivation of FLC in early embryogenesis, but required to maintain high levels of FLC expression in later embryonic and vegetative development. The protein is Protein SUPPRESSOR OF FRI 4 of Arabidopsis thaliana (Mouse-ear cress).